The following is a 233-amino-acid chain: Protease inhibitor Egf1.0 (233 aa).

Residues 1–28 (MYIDTGIMSNNIFLFAFFALVGLTRIEA) form the signal peptide. The 53-residue stretch at 52 to 104 (CRENEHYNSTRIECEEECNDRNNKLCYRFQQFCWCNEGYIRNSSHICVKLEDC) folds into the TIL domain. The segment at 201-233 (FGKPKNSSAEKKPLETETQAQKFNGIIDQETLD) is disordered.

Belongs to the polydnaviridae EGF-like motif protein family. As to quaternary structure, interacts with host PAP1 and PAP3.

Functionally, counteracts the host humoral immune response by inhibiting the processing and the amidolytic activity of host PAP3. Thereby, melanization of host hemolymph, normally producing several reactive intermediates toxic for viruses, is deregulated and proper immune response cannot occur. This is Protease inhibitor Egf1.0 (O12) from Microplitis demolitor (Parasitoid wasp).